The following is a 319-amino-acid chain: MAGRSDMDPPAAFSGFPALPAVAPSGPPPSPLAGAEPGREPEEAAAGRGEAAPTPAPGPGRRRRRPLQRGKPPYSYIALIAMALAHAPGRRLTLAAIYRFITERFAFYRDSPRKWQNSIRHNLTLNDCFVKVPREPGNPGKGNYWTLDPAAADMFDNGSFLRRRKRFKRAELPAHAAAAPGPPLPFPYAPYAPAPGPALLVPPPSAGPGPSPPARLFSVDSLVNLQPELAGLGAPEPPCCAAPDAAAAAFPPCAAAASPPLYSQVPDRLVLPATRPGPGPLPAEPLLALAGPAAALGPLSPGEAYLRQPGFASGLERYL.

The tract at residues 1 to 69 (MAGRSDMDPP…GRRRRRPLQR (69 aa)) is disordered. Positions 44 to 53 (AAAGRGEAAP) are enriched in low complexity. The fork-head DNA-binding region spans 71-165 (KPPYSYIALI…DNGSFLRRRK (95 aa)).

The protein localises to the nucleus. Its function is as follows. Transcription factor that controls lens epithelial cell growth through regulation of proliferation, apoptosis and cell cycle. During lens development, controls the ratio of the lens fiber cells to the cells of the anterior lens epithelium by regulating the rate of proliferation and differentiation. Controls lens vesicle closure and subsequent separation of the lens vesicle from ectoderm. Controls the expression of DNAJB1 in a pathway that is crucial for the development of the anterior segment of the eye. The protein is Forkhead box protein E3 (FOXE3) of Homo sapiens (Human).